A 138-amino-acid chain; its full sequence is Ribosome-binding factor A (138 aa).

The segment at 119–138 (DMDEKKNSDEKRDSDEKLED) is disordered.

Belongs to the RbfA family. As to quaternary structure, monomer. Binds 30S ribosomal subunits, but not 50S ribosomal subunits or 70S ribosomes.

The protein resides in the cytoplasm. Its function is as follows. One of several proteins that assist in the late maturation steps of the functional core of the 30S ribosomal subunit. Associates with free 30S ribosomal subunits (but not with 30S subunits that are part of 70S ribosomes or polysomes). Required for efficient processing of 16S rRNA. May interact with the 5'-terminal helix region of 16S rRNA. This is Ribosome-binding factor A from Alkaliphilus metalliredigens (strain QYMF).